Reading from the N-terminus, the 413-residue chain is Gamma-glutamyl phosphate reductase (413 aa).

It belongs to the gamma-glutamyl phosphate reductase family.

The protein resides in the cytoplasm. It catalyses the reaction L-glutamate 5-semialdehyde + phosphate + NADP(+) = L-glutamyl 5-phosphate + NADPH + H(+). It functions in the pathway amino-acid biosynthesis; L-proline biosynthesis; L-glutamate 5-semialdehyde from L-glutamate: step 2/2. Functionally, catalyzes the NADPH-dependent reduction of L-glutamate 5-phosphate into L-glutamate 5-semialdehyde and phosphate. The product spontaneously undergoes cyclization to form 1-pyrroline-5-carboxylate. The protein is Gamma-glutamyl phosphate reductase of Geobacillus sp. (strain WCH70).